Here is a 1543-residue protein sequence, read N- to C-terminus: Rho guanine nucleotide exchange factor 12 (1543 aa).

Positions 1-62 (MSGTQSTITD…KTKSSSEESR (62 aa)) are disordered. Ser-2 carries the post-translational modification N-acetylserine. The span at 28–45 (SPTDKKQKVERSSSHDFD) shows a compositional bias: basic and acidic residues. Residue Ser-41 is modified to Phosphoserine. One can recognise a PDZ domain in the interval 72 to 151 (CVIIQKDDNG…LTVQGRPPGS (80 aa)). A coiled-coil region spans residues 194–262 (VGEENNVVHN…LSKATGSAQD (69 aa)). The interval 281 to 355 (AEADPGDGLC…GAPHIIGAED (75 aa)) is disordered. Residues 293–312 (DWSSGDASRPSSDSADSPKS) show a composition bias toward low complexity. Phosphoserine is present on Ser-309. The segment covering 313 to 329 (SLRERSYLEEAPERSEG) has biased composition (basic and acidic residues). Ser-341 is subject to Phosphoserine. The RGSL domain maps to 367-558 (GQCSCFQSIE…LMYMKYLGVK (192 aa)). The disordered stretch occupies residues 574-710 (FLPKIKQSMK…DSTPRVPTTV (137 aa)). A compositionally biased stretch (basic and acidic residues) spans 582–592 (MKKDREGEEKG). Ser-637 is subject to Phosphoserine. Over residues 663–676 (ASSMSSATSGTALS) the composition is skewed to low complexity. Thr-736 is subject to Phosphothreonine. The 191-residue stretch at 787-977 (KRQEVINELF…RQILNYVNQA (191 aa)) folds into the DH domain. Positions 981–1004 (AENKQRLEDYQRRLDTSNLKLSEY) form a coiled coil. In terms of domain architecture, PH spans 1019-1132 (KMIHEGPLVW…WQDLICRMAA (114 aa)). Residues 1137 to 1158 (QSTKPIPLPQPPPCEGDNDEEE) are disordered. Phosphoserine is present on residues Ser-1288, Ser-1327, and Ser-1377. Disordered regions lie at residues 1386 to 1405 (EAHSDDNPSEGDGAVKKEEK) and 1441 to 1468 (PVTGIPAVDSSHQQQHSPQNVHPEGPVS). Polar residues predominate over residues 1450 to 1460 (SSHQQQHSPQN). Phosphoserine is present on residues Ser-1457 and Ser-1540.

As to quaternary structure, interacts with GNA12 and GNA13, probably through the RGS-like domain, with RHOA, PLXNB1 and PLXNB2, and through its PDZ domain with IGF1R beta subunit. Interacts with GCSAM. Found in a complex with ARHGEF11 and ARHGEF12; binding to ARHGEF11 and ARHGEF12 enhances CDC42 GEF activity of PLEKHG4B, and PLEKHG4B, in turn, inhibits ARHGEF11- and ARHGEF12-mediated RHOA activation. Expressed in brain, predominantly in neuronal cell bodies.

The protein localises to the cytoplasm. It is found in the membrane. Its function is as follows. May play a role in the regulation of RhoA GTPase by guanine nucleotide-binding alpha-12 (GNA12) and alpha-13 (GNA13). Acts as guanine nucleotide exchange factor (GEF) for RhoA GTPase and may act as GTPase-activating protein (GAP) for GNA12 and GNA13. This Mus musculus (Mouse) protein is Rho guanine nucleotide exchange factor 12 (Arhgef12).